The chain runs to 288 residues: Alpha-acetolactate decarboxylase (288 aa).

The N-terminal stretch at 1 to 23 (MNIKYFLIFLILLAVTSFTLFSG) is a signal peptide.

Belongs to the alpha-acetolactate decarboxylase family.

It carries out the reaction (2S)-2-acetolactate + H(+) = (R)-acetoin + CO2. It functions in the pathway polyol metabolism; (R,R)-butane-2,3-diol biosynthesis; (R,R)-butane-2,3-diol from pyruvate: step 2/3. Its function is as follows. Converts acetolactate into acetoin. The sequence is that of Alpha-acetolactate decarboxylase from Methanosarcina mazei (strain ATCC BAA-159 / DSM 3647 / Goe1 / Go1 / JCM 11833 / OCM 88) (Methanosarcina frisia).